A 336-amino-acid polypeptide reads, in one-letter code: MKERIVNLETLDFETSQEVSLRPDLWENYIGQEKIKNNLQISICAAKKRQESLDHMLFFGPPGLGKTSISHIIAKEMETNIKITAAPMIEKSGDLAAILTNLQAKDILFIDEIHRLSPAIEEVLYPAMEDFRLDIIIGSGPAAQTIKIDLPPFTLIGATTRVGMLSNPLRDRFGMSFRMQFYSPSELALIIKKAATKLNQDIKEESADEIAKRSRGTPRIALRLLKRVRDFALVKNSSLMDLNITLHALNELGVNELGFDEADLAYLSLLANAQGKPVGLNTIAASMREDESTIEDVIEPFLLANGYLERTAKGRIATPKTHALLKIPTLKSQSLF.

The interval 1 to 182 (MKERIVNLET…FGMSFRMQFY (182 aa)) is large ATPase domain (RuvB-L). Residues Leu-21, Arg-22, Gly-63, Lys-66, Thr-67, Ser-68, 129 to 131 (EDF), Arg-172, Tyr-182, and Arg-219 contribute to the ATP site. Thr-67 contacts Mg(2+). Positions 183–253 (SPSELALIIK…ITLHALNELG (71 aa)) are small ATPAse domain (RuvB-S). Residues 256 to 336 (ELGFDEADLA…IPTLKSQSLF (81 aa)) form a head domain (RuvB-H) region. DNA-binding residues include Arg-310 and Arg-315.

The protein belongs to the RuvB family. Homohexamer. Forms an RuvA(8)-RuvB(12)-Holliday junction (HJ) complex. HJ DNA is sandwiched between 2 RuvA tetramers; dsDNA enters through RuvA and exits via RuvB. An RuvB hexamer assembles on each DNA strand where it exits the tetramer. Each RuvB hexamer is contacted by two RuvA subunits (via domain III) on 2 adjacent RuvB subunits; this complex drives branch migration. In the full resolvosome a probable DNA-RuvA(4)-RuvB(12)-RuvC(2) complex forms which resolves the HJ.

It is found in the cytoplasm. The enzyme catalyses ATP + H2O = ADP + phosphate + H(+). Its function is as follows. The RuvA-RuvB-RuvC complex processes Holliday junction (HJ) DNA during genetic recombination and DNA repair, while the RuvA-RuvB complex plays an important role in the rescue of blocked DNA replication forks via replication fork reversal (RFR). RuvA specifically binds to HJ cruciform DNA, conferring on it an open structure. The RuvB hexamer acts as an ATP-dependent pump, pulling dsDNA into and through the RuvAB complex. RuvB forms 2 homohexamers on either side of HJ DNA bound by 1 or 2 RuvA tetramers; 4 subunits per hexamer contact DNA at a time. Coordinated motions by a converter formed by DNA-disengaged RuvB subunits stimulates ATP hydrolysis and nucleotide exchange. Immobilization of the converter enables RuvB to convert the ATP-contained energy into a lever motion, pulling 2 nucleotides of DNA out of the RuvA tetramer per ATP hydrolyzed, thus driving DNA branch migration. The RuvB motors rotate together with the DNA substrate, which together with the progressing nucleotide cycle form the mechanistic basis for DNA recombination by continuous HJ branch migration. Branch migration allows RuvC to scan DNA until it finds its consensus sequence, where it cleaves and resolves cruciform DNA. The sequence is that of Holliday junction branch migration complex subunit RuvB from Helicobacter acinonychis (strain Sheeba).